Here is a 732-residue protein sequence, read N- to C-terminus: E3 ubiquitin-protein ligase hel2 (732 aa).

A disordered region spans residues 1-48; sequence MSPSGPNLNNKEHNRASEKKNSRTHNKKTNRNQSKEKPVSSRSVETPK. The span at 10-21 shows a compositional bias: basic and acidic residues; that stretch reads NKEHNRASEKKN. The RING-type zinc finger occupies 81–121; it reads CFICAEGITYSCVLPCNHRMCHVCALRLRALYKTKECTFCK. The 71-residue stretch at 245–315 folds into the LIM zinc-binding domain; it reads PKCEFCNTHF…RECLERKFVV (71 aa). 3 disordered regions span residues 345–380, 411–501, and 623–732; these read IIPQ…NETA, DFGF…QHQQ, and HDGP…FHIG. Polar residues-rich tracts occupy residues 366 to 380 and 415 to 433; these read SSTP…NETA and TLSN…TRTI. Residues 457 to 468 show a composition bias toward low complexity; the sequence is SSSAPSVPVSAP. Serine 482 carries the post-translational modification Phosphoserine. Polar residues-rich tracts occupy residues 490–501 and 629–654; these read PMASSEQAQHQQ and SAPS…NTPS. The segment covering 701–713 has biased composition (low complexity); that stretch reads STPNTSSNRNSNT.

The protein belongs to the ZNF598/HEL2 family.

It is found in the cytoplasm. It carries out the reaction S-ubiquitinyl-[E2 ubiquitin-conjugating enzyme]-L-cysteine + [acceptor protein]-L-lysine = [E2 ubiquitin-conjugating enzyme]-L-cysteine + N(6)-ubiquitinyl-[acceptor protein]-L-lysine.. It functions in the pathway protein modification; protein ubiquitination. Functionally, E3 ubiquitin-protein ligase that plays a key role in the ribosome quality control (RQC), a pathway that takes place when a ribosome has stalled during translation, leading to degradation of nascent peptide chains. Activated when ribosomes are stalled within an mRNA following translation of prematurely polyadenylated mRNAs. Acts as a ribosome collision sensor: specifically recognizes and binds collided ribosome and ubiquitinates the 40S ribosomal proteins rps20/uS10 and rps3/uS3. Catalyzes 'Lys-63'-linked polyubiquitination of rps20/uS10, promoting recruitment of the RQT (ribosome quality control trigger) complex, which drives the disassembly of stalled ribosomes, followed by degradation of nascent peptides. The polypeptide is E3 ubiquitin-protein ligase hel2 (Schizosaccharomyces pombe (strain 972 / ATCC 24843) (Fission yeast)).